The following is a 344-amino-acid chain: Holliday junction branch migration complex subunit RuvB (344 aa).

Residues Met1 to Tyr182 form a large ATPase domain (RuvB-L) region. Residues Leu21, Arg22, Gly63, Lys66, Thr67, Thr68, Glu129 to Phe131, Arg172, Tyr182, and Arg219 contribute to the ATP site. Thr67 serves as a coordination point for Mg(2+). Positions Asn183 to Glu253 are small ATPAse domain (RuvB-S). Residues Pro256–Phe344 form a head domain (RuvB-H) region. 2 residues coordinate DNA: Arg311 and Arg316.

This sequence belongs to the RuvB family. In terms of assembly, homohexamer. Forms an RuvA(8)-RuvB(12)-Holliday junction (HJ) complex. HJ DNA is sandwiched between 2 RuvA tetramers; dsDNA enters through RuvA and exits via RuvB. An RuvB hexamer assembles on each DNA strand where it exits the tetramer. Each RuvB hexamer is contacted by two RuvA subunits (via domain III) on 2 adjacent RuvB subunits; this complex drives branch migration. In the full resolvosome a probable DNA-RuvA(4)-RuvB(12)-RuvC(2) complex forms which resolves the HJ.

The protein resides in the cytoplasm. It carries out the reaction ATP + H2O = ADP + phosphate + H(+). Functionally, the RuvA-RuvB-RuvC complex processes Holliday junction (HJ) DNA during genetic recombination and DNA repair, while the RuvA-RuvB complex plays an important role in the rescue of blocked DNA replication forks via replication fork reversal (RFR). RuvA specifically binds to HJ cruciform DNA, conferring on it an open structure. The RuvB hexamer acts as an ATP-dependent pump, pulling dsDNA into and through the RuvAB complex. RuvB forms 2 homohexamers on either side of HJ DNA bound by 1 or 2 RuvA tetramers; 4 subunits per hexamer contact DNA at a time. Coordinated motions by a converter formed by DNA-disengaged RuvB subunits stimulates ATP hydrolysis and nucleotide exchange. Immobilization of the converter enables RuvB to convert the ATP-contained energy into a lever motion, pulling 2 nucleotides of DNA out of the RuvA tetramer per ATP hydrolyzed, thus driving DNA branch migration. The RuvB motors rotate together with the DNA substrate, which together with the progressing nucleotide cycle form the mechanistic basis for DNA recombination by continuous HJ branch migration. Branch migration allows RuvC to scan DNA until it finds its consensus sequence, where it cleaves and resolves cruciform DNA. The protein is Holliday junction branch migration complex subunit RuvB of Desulforamulus reducens (strain ATCC BAA-1160 / DSM 100696 / MI-1) (Desulfotomaculum reducens).